A 336-amino-acid polypeptide reads, in one-letter code: RHOMBOID-like protein 12, mitochondrial (336 aa).

The transit peptide at 1–85 (MKAIFNRRVV…RGFFASALGN (85 aa)) directs the protein to the mitochondrion. 6 helical membrane passes run 135–155 (VVLG…VFNQ), 185–205 (IDIG…TSIA), 216–236 (LYLA…AYMA), 254–274 (PGLG…FLHP), 276–296 (ATLY…IFLI), and 307–327 (NSNI…IAWA). Catalysis depends on serine 259, which acts as the Nucleophile. Histidine 315 (charge relay system) is an active-site residue.

It belongs to the peptidase S54 family.

It localises to the mitochondrion membrane. Functionally, probable rhomboid-type serine protease that catalyzes intramembrane proteolysis. Unable to cleave either of the yeast Pcp1 substrates in yeast cells. The chain is RHOMBOID-like protein 12, mitochondrial from Arabidopsis thaliana (Mouse-ear cress).